Consider the following 267-residue polypeptide: Hydroxypyruvate/pyruvate aldolase Bphyt_5830 (267 aa).

Residue His-48 is the Proton acceptor of the active site. Residues Glu-152 and Asp-178 each contribute to the a divalent metal cation site.

It belongs to the HpcH/HpaI aldolase family. The cofactor is a divalent metal cation.

It carries out the reaction D-glyceraldehyde + 3-hydroxypyruvate = 2-dehydro-D-galactonate. The enzyme catalyses D-glyceraldehyde + 3-hydroxypyruvate = (3R,4S,5R)-3,4,5,6-tetrahydroxy-2-oxohexanoate. The catalysed reaction is D-glyceraldehyde + pyruvate = 2-dehydro-3-deoxy-L-galactonate. Functionally, aldolase which can catalyze in vitro the aldolisation reaction between hydroxypyruvate (HPA) or pyruvate (PA) and D-glyceraldehyde (D-GA). The condensation of hydroxypyruvate and D-glyceraldehyde produces 2-dehydro-D-galactonate as the major product and (3R,4S,5R)-3,4,5,6-tetrahydroxy-2-oxohexanoate. The condensation of pyruvate and D-glyceraldehyde produces 2-dehydro-3-deoxy-L-galactonate. This Paraburkholderia phytofirmans (strain DSM 17436 / LMG 22146 / PsJN) (Burkholderia phytofirmans) protein is Hydroxypyruvate/pyruvate aldolase Bphyt_5830.